The chain runs to 417 residues: Dibenzothiophene monooxygenase (417 aa).

FMN-binding positions include tyrosine 96, 129-134, 159-163, arginine 282, 369-370, and histidine 391; these read NASSEN, KHFCS, and AR. Residues 131–142 form a lid loop region; sequence SSENNSHVLDWK.

The protein belongs to the DszC flavin monooxygenase family. As to quaternary structure, homotetramer. Homodimer. The cofactor is FAD. It depends on NADH as a cofactor.

It localises to the cytoplasm. It carries out the reaction dibenzothiophene + 2 FMNH2 + 2 O2 = dibenzothiophene 5,5-dioxide + 2 FMN + 2 H2O + 2 H(+). The enzyme catalyses dibenzothiophene + FMNH2 + O2 = dibenzothiophene 5-oxide + FMN + H2O + H(+). It catalyses the reaction dibenzothiophene 5-oxide + FMNH2 + O2 = dibenzothiophene 5,5-dioxide + FMN + H2O + H(+). Its pathway is sulfur metabolism; dibenzothiophene degradation. In terms of biological role, catalyzes the first step of the '4S' desulfurization pathway that removes covalently bound sulfur from dibenzothiophene (DBT) without breaking carbon-carbon bonds. Sulfur dioxygenase which converts DBT to DBT-sulfone (DBTO2 or DBT 5,5-dioxide) in a stepwise manner. In DBTO (dibenzothiophene-5-oxide) was reported not to be a substrate, in it is reported to be a substrate. Can also use benzyl sulfide and benzyl sulfoxide as substrates, although benzyl sulfoxide is a poor substrate. The pathway substrate specificity has been augmented using mutagenesis, however no mutations allowed use of alkylated thiophenes. In Rhodococcus qingshengii, this protein is Dibenzothiophene monooxygenase.